The following is a 217-amino-acid chain: Thymidylate kinase (217 aa).

Residue 7-14 coordinates ATP; the sequence is GIEGTGKT.

The protein belongs to the thymidylate kinase family.

It carries out the reaction dTMP + ATP = dTDP + ADP. Its function is as follows. Phosphorylation of dTMP to form dTDP in both de novo and salvage pathways of dTTP synthesis. The sequence is that of Thymidylate kinase from Maridesulfovibrio salexigens (strain ATCC 14822 / DSM 2638 / NCIMB 8403 / VKM B-1763) (Desulfovibrio salexigens).